We begin with the raw amino-acid sequence, 425 residues long: uncharacterized protein (425 aa).

Positions 2-53 (SFNLLDLPIVPRQKALKYLEPIDLFELSLCSKRMAQSVRDLKIEASAHFITL) constitute an F-box domain.

This is an uncharacterized protein from Caenorhabditis elegans.